The sequence spans 773 residues: MIRDLSKMYPQTRHPAPHQPAQPFKFTISESCDRIKEEFQFLQAQYHSLKLECEKLASEKTEMQRHYVMYYEMSYGLNIEMHKQAEIVKRLNAICAQVIPFLSQEHQQQVVQAVERAKQVTMAELNAIIGQQLQAQHLSHGHGLPVPLTPHPSGLQPPAIPPIGSSAGLLALSSALGGQSHLPIKDEKKHHDNDHQRDRDSIKSSSVSPSASFRGAEKHRNSADYSSESKKQKTEEKEIAARYDSDGEKSDDNLVVDVSNEDPSSPRGSPAHSPRENGLDKTRLLKKDAPISPASIASSSSTPSSKSKELSLNEKSTTPVSKSNTPTPRTDAPTPGSNSTPGLRPVPGKPPGVDPLASSLRTPMAVPCPYPTPFGIVPHAGMNGELTSPGAAYAGLHNISPQMSAAAAAAAAAAAYGRSPVVGFDPHHHMRVPAIPPNLTGIPGGKPAYSFHVSADGQMQPVPFPPDALIGPGIPRHARQINTLNHGEVVCAVTISNPTRHVYTGGKGCVKVWDISHPGNKSPVSQLDCLNRDNYIRSCRLLPDGRTLIVGGEASTLSIWDLAAPTPRIKAELTSSAPACYALAISPDSKVCFSCCSDGNIAVWDLHNQTLVRQFQGHTDGASCIDISNDGTKLWTGGLDNTVRSWDLREGRQLQQHDFTSQIFSLGYCPTGEWLAVGMENSNVEVLHVTKPDKYQLHLHESCVLSLKFAHCGKWFVSTGKDNLLNAWRTPYGASIFQSKESSSVLSCDISVDDKYIVTGSGDKKATVYEVIY.

3 disordered regions span residues 1–22, 140–162, and 182–360; these read MIRD…QPAQ, HGHG…AIPP, and LPIK…ASSL. Residues 1-136 are q domain; it reads MIRDLSKMYP…AIIGQQLQAQ (136 aa). Positions 137-204 are GP domain; it reads HLSHGHGLPV…HQRDRDSIKS (68 aa). Residues 183–202 are compositionally biased toward basic and acidic residues; that stretch reads PIKDEKKHHDNDHQRDRDSI. Over residues 203–212 the composition is skewed to low complexity; that stretch reads KSSSVSPSAS. The segment at 205 to 274 is ccN domain; that stretch reads SSVSPSASFR…SPRGSPAHSP (70 aa). 3 positions are modified to phosphoserine: Ser-208, Ser-212, and Ser-222. The span at 215-252 shows a compositional bias: basic and acidic residues; the sequence is GAEKHRNSADYSSESKKQKTEEKEIAARYDSDGEKSDD. Position 237 is an N6-acetyllysine (Lys-237). Residues Ser-245, Ser-250, Ser-269, and Ser-273 each carry the phosphoserine modification. Basic and acidic residues predominate over residues 273–289; the sequence is SPRENGLDKTRLLKKDA. The segment at 275–452 is SP domain; that stretch reads RENGLDKTRL…PGGKPAYSFH (178 aa). N6-acetyllysine is present on Lys-281. Positions 290-305 are enriched in low complexity; that stretch reads PISPASIASSSSTPSS. Ser-292 bears the Phosphoserine mark. The segment covering 317–328 has biased composition (polar residues); that stretch reads TTPVSKSNTPTP. Thr-318 bears the Phosphothreonine mark. A phosphoserine mark is found at Ser-321 and Ser-323. Residues Thr-325, Thr-327, Thr-334, and Thr-340 each carry the phosphothreonine modification. A Phosphoserine modification is found at Ser-419. WD repeat units follow at residues 485–523, 531–570, 575–614, 617–656, 658–697, 699–738, and 740–773; these read NHGE…NKSP, NRDN…PRIK, SSAP…LVRQ, GHTD…QLQQ, DFTS…KYQL, LHES…SIFQ, and KESS…EVIY.

The protein belongs to the WD repeat Groucho/TLE family. As to quaternary structure, homooligomer and heterooligomer with other family members. Interacts with PAX5. Interacts with LEF1, TCF7, TCF7L1 and TCF7L2. Interacts with ZNF703; TLE4 may mediate ZNF703 transcriptional repression. Interacts with SIX3 and SIX6. Interacts with PAX2. Interacts with TLE1. In terms of processing, phosphorylated. PAX5 binding increases phosphorylation. Post-translationally, ubiquitinated by XIAP/BIRC4. As to expression, in all tissues examined, mostly in brain, and muscle.

It is found in the nucleus. Transcriptional corepressor that binds to a number of transcription factors. Inhibits the transcriptional activation mediated by PAX5, and by CTNNB1 and TCF family members in Wnt signaling. The effects of full-length TLE family members may be modulated by association with dominant-negative AES. Essential for the transcriptional repressor activity of SIX3 during retina and lens development and for SIX3 transcriptional auto-repression. Involved in transcriptional repression of GNRHR and enhances MSX1-mediated transcriptional repression of CGA/alpha-GSU. The chain is Transducin-like enhancer protein 4 (TLE4) from Homo sapiens (Human).